A 486-amino-acid chain; its full sequence is O-methyltransferase gedA (486 aa).

S-adenosyl-L-methionine contacts are provided by residues 298-299 (GG), Asp321, 353-354 (SF), and Arg369. His373 serves as the catalytic Proton acceptor.

It belongs to the class I-like SAM-binding methyltransferase superfamily. Cation-independent O-methyltransferase family.

The enzyme catalyses emodin + S-adenosyl-L-methionine = questin + S-adenosyl-L-homocysteine + H(+). The protein operates within secondary metabolite biosynthesis. Its function is as follows. O-methyltransferase; part of the gene cluster that mediates the biosynthesis of geodin, an intermediate in the biosynthesis of other natural products. The pathway begins with the synthesis of atrochrysone thioester by the polyketide synthase (PKS) gedC. The atrochrysone carboxyl ACP thioesterase gedB then breaks the thioester bond and releases the atrochrysone carboxylic acid from gedC. The atrochrysone carboxylic acid is then converted to atrochrysone which is further transformed into emodinanthrone. The next step is performed by the emodinanthrone oxygenase gedH that catalyzes the oxidation of emodinanthrone to emodin. Emodin O-methyltransferase encoded probably by gedA then catalyzes methylation of the 8-hydroxy group of emodin to form questin. Ring cleavage of questin by questin oxidase gedK leads to desmethylsulochrin via several intermediates including questin epoxide. Another methylation step probably catalyzed by methyltransferase gedG leads to the formation of sulochrin which is further converted to dihydrogeodin by the sulochrin halogenase gedL. Finally, the dihydrogeodin oxidase gedJ catalyzes the stereospecific phenol oxidative coupling reaction converting dihydrogeodin to geodin. The sequence is that of O-methyltransferase gedA from Aspergillus terreus (strain NIH 2624 / FGSC A1156).